The sequence spans 615 residues: Translation initiation factor IF-2 (615 aa).

Residues K118–E285 enclose the tr-type G domain. The G1 stretch occupies residues G127–T134. G127–T134 is a binding site for GTP. Residues G152–H156 are G2. Residues D173–G176 form a G3 region. GTP-binding positions include D173–H177 and N227–D230. The tract at residues N227–D230 is G4. A G5 region spans residues S263–I265.

It belongs to the TRAFAC class translation factor GTPase superfamily. Classic translation factor GTPase family. IF-2 subfamily.

It is found in the cytoplasm. In terms of biological role, one of the essential components for the initiation of protein synthesis. Protects formylmethionyl-tRNA from spontaneous hydrolysis and promotes its binding to the 30S ribosomal subunits. Also involved in the hydrolysis of GTP during the formation of the 70S ribosomal complex. The sequence is that of Translation initiation factor IF-2 from Mycoplasmoides gallisepticum (strain R(low / passage 15 / clone 2)) (Mycoplasma gallisepticum).